Reading from the N-terminus, the 2161-residue chain is DNA polymerase epsilon catalytic subunit A (2161 aa).

Short sequence motifs (nuclear localization signal) lie at residues 5 to 12 (NRRRDRKD), 1137 to 1144 (HKKVREKD), and 1239 to 1246 (LKKRKWKV). Zn(2+)-binding residues include C2038, C2041, C2063, and C2068. Residues 2038–2068 (CSNCDAYRDLDICRDPALLTEKEWSCADTQC) form a CysA-type zinc finger. The [4Fe-4S] cluster site is built by C2099, C2102, C2114, and C2116. The CysB motif motif lies at 2099-2116 (CIRCNQVKAAHLTEQCEC). The Nuclear localization signal 4 motif lies at 2130–2137 (SKRMEIFM).

This sequence belongs to the DNA polymerase type-B family. In terms of assembly, heterotetramer. Subunit of the DNA polymerase II. Interacts (via C-terminus) with DPB2. Interacts with LHP1/TFL2. It depends on [4Fe-4S] cluster as a cofactor. As to expression, mostly expressed at low levels in inflorescence (floral meristem and flowers until anthesis), and, to a lower extent, in roots, seeds and leaves.

The protein resides in the nucleus. It catalyses the reaction DNA(n) + a 2'-deoxyribonucleoside 5'-triphosphate = DNA(n+1) + diphosphate. Its function is as follows. DNA polymerase II, which participates in chromosomal DNA replication. Required for the timing and determination of cell fate during plant embryogenesis and root pole development, by promoting cell cycle and cell type patterning. Necessary for proper shoot (SAM) and root apical meristem (RAM) functions. Involved in maintaining epigenetic states, controlling hypersensitive response (HR), and mediating abscisic acid (ABA) signaling. Required for flowering repression through a mechanism involving epigenetic gene silencing. May participate in processes involved in chromatin-mediated cellular memory. This is DNA polymerase epsilon catalytic subunit A (POL2A) from Arabidopsis thaliana (Mouse-ear cress).